Consider the following 437-residue polypeptide: UDP-N-acetylmuramate--L-alanine ligase (437 aa).

114-120 contributes to the ATP binding site; that stretch reads GTHGKTS.

This sequence belongs to the MurCDEF family.

The protein localises to the cytoplasm. It catalyses the reaction UDP-N-acetyl-alpha-D-muramate + L-alanine + ATP = UDP-N-acetyl-alpha-D-muramoyl-L-alanine + ADP + phosphate + H(+). It participates in cell wall biogenesis; peptidoglycan biosynthesis. Functionally, cell wall formation. The sequence is that of UDP-N-acetylmuramate--L-alanine ligase from Lactobacillus helveticus (strain DPC 4571).